Reading from the N-terminus, the 699-residue chain is Elongation factor G (699 aa).

The region spanning 8–283 (EHIRNIGICA…AVVDFLPSPI (276 aa)) is the tr-type G domain. GTP-binding positions include 17–24 (AHIDAGKT), 81–85 (DTPGH), and 135–138 (NKMD).

Belongs to the TRAFAC class translation factor GTPase superfamily. Classic translation factor GTPase family. EF-G/EF-2 subfamily.

It localises to the cytoplasm. In terms of biological role, catalyzes the GTP-dependent ribosomal translocation step during translation elongation. During this step, the ribosome changes from the pre-translocational (PRE) to the post-translocational (POST) state as the newly formed A-site-bound peptidyl-tRNA and P-site-bound deacylated tRNA move to the P and E sites, respectively. Catalyzes the coordinated movement of the two tRNA molecules, the mRNA and conformational changes in the ribosome. The chain is Elongation factor G from Rickettsia rickettsii.